Here is a 414-residue protein sequence, read N- to C-terminus: Tryptophan synthase beta chain (414 aa).

K105 bears the N6-(pyridoxal phosphate)lysine mark.

Belongs to the TrpB family. As to quaternary structure, tetramer of two alpha and two beta chains. The cofactor is pyridoxal 5'-phosphate.

It catalyses the reaction (1S,2R)-1-C-(indol-3-yl)glycerol 3-phosphate + L-serine = D-glyceraldehyde 3-phosphate + L-tryptophan + H2O. Its pathway is amino-acid biosynthesis; L-tryptophan biosynthesis; L-tryptophan from chorismate: step 5/5. The beta subunit is responsible for the synthesis of L-tryptophan from indole and L-serine. This is Tryptophan synthase beta chain from Gloeobacter violaceus (strain ATCC 29082 / PCC 7421).